A 69-amino-acid polypeptide reads, in one-letter code: Small, acid-soluble spore protein I (69 aa).

The protein belongs to the SspI family.

Its subcellular location is the spore core. The sequence is that of Small, acid-soluble spore protein I from Bacillus mycoides (strain KBAB4) (Bacillus weihenstephanensis).